Reading from the N-terminus, the 197-residue chain is Auxin-responsive protein IAA31 (197 aa).

2 disordered regions span residues M1–K43 and S66–Q90. The short motif at L9–L13 is the EAR-like (transcriptional repression) element. Residues G99–G186 enclose the PB1 domain.

The protein belongs to the Aux/IAA family. As to quaternary structure, homodimers and heterodimers. As to expression, highly expressed in etiolated seedlings. Expressed in roots.

The protein localises to the nucleus. In terms of biological role, aux/IAA proteins are short-lived transcriptional factors that function as repressors of early auxin response genes at low auxin concentrations. In Oryza sativa subsp. japonica (Rice), this protein is Auxin-responsive protein IAA31 (IAA31).